Reading from the N-terminus, the 382-residue chain is Heme A synthase (382 aa).

Helical transmembrane passes span 25-45, 112-132, 141-161, 176-196, 211-231, 270-290, 303-323, and 327-347; these read GAVRAWLYLLAVLVVAMVAVG, LLGRIVGLVFFLPFAWFWARG, GLLGLGLLGGLQGAIGWIMVA, LALHLTTASLILAGLVWLAAG, VVACLLPALVLVQIWLGGLVA, LALVQFNHRLFAYLVVAVAIA, AAAGRAMGVAALATAQMGLGI, and LLHVPLWAGLAHQVFAMAVLI. Residue His277 participates in heme binding. Heme is bound at residue His338.

It belongs to the COX15/CtaA family. Type 2 subfamily. In terms of assembly, interacts with CtaB. Heme b serves as cofactor.

Its subcellular location is the cell membrane. It carries out the reaction Fe(II)-heme o + 2 A + H2O = Fe(II)-heme a + 2 AH2. The protein operates within porphyrin-containing compound metabolism; heme A biosynthesis; heme A from heme O: step 1/1. Functionally, catalyzes the conversion of heme O to heme A by two successive hydroxylations of the methyl group at C8. The first hydroxylation forms heme I, the second hydroxylation results in an unstable dihydroxymethyl group, which spontaneously dehydrates, resulting in the formyl group of heme A. The chain is Heme A synthase from Methylorubrum extorquens (strain CM4 / NCIMB 13688) (Methylobacterium extorquens).